The primary structure comprises 359 residues: Dual-specificity RNA methyltransferase RlmN (359 aa).

Glutamate 86 (proton acceptor) is an active-site residue. Residues 105–338 enclose the Radical SAM core domain; that stretch reads EGEKYTICVS…CTIRESKGID (234 aa). The cysteines at positions 112 and 343 are disulfide-linked. Positions 119, 123, and 126 each coordinate [4Fe-4S] cluster. S-adenosyl-L-methionine is bound by residues 169-170, serine 201, 224-226, and asparagine 300; these read GE and SLH. The active-site S-methylcysteine intermediate is cysteine 343.

This sequence belongs to the radical SAM superfamily. RlmN family. [4Fe-4S] cluster serves as cofactor.

The protein resides in the cytoplasm. The catalysed reaction is adenosine(2503) in 23S rRNA + 2 reduced [2Fe-2S]-[ferredoxin] + 2 S-adenosyl-L-methionine = 2-methyladenosine(2503) in 23S rRNA + 5'-deoxyadenosine + L-methionine + 2 oxidized [2Fe-2S]-[ferredoxin] + S-adenosyl-L-homocysteine. It catalyses the reaction adenosine(37) in tRNA + 2 reduced [2Fe-2S]-[ferredoxin] + 2 S-adenosyl-L-methionine = 2-methyladenosine(37) in tRNA + 5'-deoxyadenosine + L-methionine + 2 oxidized [2Fe-2S]-[ferredoxin] + S-adenosyl-L-homocysteine. In terms of biological role, specifically methylates position 2 of adenine 2503 in 23S rRNA and position 2 of adenine 37 in tRNAs. m2A2503 modification seems to play a crucial role in the proofreading step occurring at the peptidyl transferase center and thus would serve to optimize ribosomal fidelity. This Wolinella succinogenes (strain ATCC 29543 / DSM 1740 / CCUG 13145 / JCM 31913 / LMG 7466 / NCTC 11488 / FDC 602W) (Vibrio succinogenes) protein is Dual-specificity RNA methyltransferase RlmN.